We begin with the raw amino-acid sequence, 342 residues long: S-adenosylmethionine:tRNA ribosyltransferase-isomerase (342 aa).

It belongs to the QueA family. Monomer.

The protein localises to the cytoplasm. The enzyme catalyses 7-aminomethyl-7-carbaguanosine(34) in tRNA + S-adenosyl-L-methionine = epoxyqueuosine(34) in tRNA + adenine + L-methionine + 2 H(+). It functions in the pathway tRNA modification; tRNA-queuosine biosynthesis. Functionally, transfers and isomerizes the ribose moiety from AdoMet to the 7-aminomethyl group of 7-deazaguanine (preQ1-tRNA) to give epoxyqueuosine (oQ-tRNA). This is S-adenosylmethionine:tRNA ribosyltransferase-isomerase from Campylobacter jejuni subsp. jejuni serotype O:23/36 (strain 81-176).